A 330-amino-acid polypeptide reads, in one-letter code: Aspartate--ammonia ligase (330 aa).

The protein belongs to the class-II aminoacyl-tRNA synthetase family. AsnA subfamily.

It is found in the cytoplasm. The catalysed reaction is L-aspartate + NH4(+) + ATP = L-asparagine + AMP + diphosphate + H(+). It participates in amino-acid biosynthesis; L-asparagine biosynthesis; L-asparagine from L-aspartate (ammonia route): step 1/1. In Streptococcus equi subsp. zooepidemicus (strain H70), this protein is Aspartate--ammonia ligase.